Here is a 481-residue protein sequence, read N- to C-terminus: Cytochrome P450 monooygenase 2 (481 aa).

A helical transmembrane segment spans residues 12 to 32; it reads GSQLLPFYIAIFVFTLVPWAI. Heme is bound at residue cysteine 418.

This sequence belongs to the cytochrome P450 family. Heme serves as cofactor.

The protein resides in the membrane. Its pathway is plant hormone biosynthesis; gibberellin biosynthesis. Its function is as follows. Gibberellin 20-oxidase; part of the gene cluster that mediates the biosynthesis of gibberellins (GAs), diterpenoids that may provide a selective advantage during infection of the preferred host plant, rice. Gibberellins (GAs) are diterpenoids and are synthesized via the mevalonate pathway. Biosynthesis of the major metabolite GA3 (gibberellic acid) from geranylgeranyl diphosphate (GGPP) requires 13 steps. The GGPP produced by the geranylgeranyl diphosphate synthase GGS2 is converted to ent-kaurene via ent-copalyldiphosphate in a two-step cyclization reaction performed by the bifunctional ent-copalyl diphosphate synthase/ent-kaurene synthase enzyme (CPS/KS). Ent-Kaurene is metabolized to GAs by a series of oxidation reactions catalyzed by cytochrome P450 monooxygenases. Cytochrome P450 monooxygenase P450-4 is an ent-kaurene oxidase that catalyzes the three oxidation steps between ent-kaurene and ent-kaurenoic acid. The highly multifunctional cytochrome P450 monooxygenase P450-1 then catalyzes four steps involving oxidation at two carbon atoms, in the main pathway from ent-kaurenoic acid to GA14 via GA12-aldehyde as well as producing kaurenolides and fujenoic acids as by-products. The cytochrome P450 monooxygenase P450-2 then converts GA14 to GA4 by removal of C-20. GA4 is further converted to GA7 by the GA4 desaturase DES via 1,2-desaturation before cytochrome P450 monooxygenase P450-3, a 13-hydroxylase, hydroxylates GA7 to GA3, the final product of the GA-biosynthetic pathway. The chain is Cytochrome P450 monooygenase 2 from Gibberella fujikuroi (strain CBS 195.34 / IMI 58289 / NRRL A-6831) (Bakanae and foot rot disease fungus).